The primary structure comprises 106 residues: Transcriptional and immune response regulator (106 aa).

Monomer. Interacts with NOTCH2 (via ANK repeats), the interaction inhibits the nuclear translocation of NOTCH2 N2ICD. Interacts (C-terminus) with CBY1 (C-terminus), TCIM competes with CTNNB1 for the interaction with CBY1. Ubiquitous. Expressed in thyroid papillary carcinoma. Expressed in liver, expression levels decrease in hepatocellular carcinoma. Slightly detected in normal lung, its expression is highly induced in lung cancer cells (at protein level).

The protein resides in the cytoplasm. Its subcellular location is the nucleus. It is found in the nucleolus. It localises to the nucleus speckle. Functionally, seems to be involved in the regulation of cell growth an differentiation, may play different and opposite roles depending on the tissue or cell type. May enhance the WNT-CTNNB1 pathway by relieving antagonistic activity of CBY1. Enhances the proliferation of follicular dendritic cells. Plays a role in the mitogen-activated MAPK2/3 signaling pathway, positively regulates G1-to-S-phase transition of the cell cycle. In endothelial cells, enhances key inflammatory mediators and inflammatory response through the modulation of NF-kappaB transcriptional regulatory activity. Involved in the regulation of heat shock response, seems to play a positive feedback with HSF1 to modulate heat-shock downstream gene expression. Plays a role in the regulation of hematopoiesis even if the mechanisms are unknown. In cancers such as thyroid or lung cancer, it has been described as promoter of cell proliferation, G1-to-S-phase transition and inhibitor of apoptosis. However, it negatively regulates self-renewal of liver cancer cells via suppresion of NOTCH2 signaling. The chain is Transcriptional and immune response regulator from Homo sapiens (Human).